The following is a 159-amino-acid chain: MQKRAIYPGTFDPITNGHLDIVTRATQMFDHVILAIAASPGKNPMFTLDERVALAQKATAHLSNVEVAGFSDLMANFARDRQANILIRGLRAVADFEYEMQLAHMNRHLMPQLESVFLMPSKEWSFISSSLVKEVARHQGDVTHFLPDNVHQALMNKLK.

Substrate is bound at residue threonine 10. ATP-binding positions include 10 to 11 (TF) and histidine 18. The substrate site is built by lysine 42, methionine 74, and arginine 88. ATP is bound by residues 89–91 (GLR), glutamate 99, and 124–130 (WSFISSS).

This sequence belongs to the bacterial CoaD family. Homohexamer. Mg(2+) serves as cofactor.

It localises to the cytoplasm. The catalysed reaction is (R)-4'-phosphopantetheine + ATP + H(+) = 3'-dephospho-CoA + diphosphate. Its pathway is cofactor biosynthesis; coenzyme A biosynthesis; CoA from (R)-pantothenate: step 4/5. Functionally, reversibly transfers an adenylyl group from ATP to 4'-phosphopantetheine, yielding dephospho-CoA (dPCoA) and pyrophosphate. This Salmonella arizonae (strain ATCC BAA-731 / CDC346-86 / RSK2980) protein is Phosphopantetheine adenylyltransferase.